Consider the following 151-residue polypeptide: Ribosome maturation factor RimP (151 aa).

It belongs to the RimP family.

The protein resides in the cytoplasm. In terms of biological role, required for maturation of 30S ribosomal subunits. The protein is Ribosome maturation factor RimP of Haemophilus influenzae (strain 86-028NP).